The following is a 562-amino-acid chain: Sensor histidine kinase MtrB (562 aa).

2 helical membrane-spanning segments follow: residues 42–62 and 213–233; these read VVAL…FVLT and GTMA…ALLV. The 53-residue stretch at 235–287 folds into the HAMP domain; it reads RQVVVPVRSASRIAERFAEGHLSERMPVRGEDDMARLAVSFNDMAESLSRQIT. The region spanning 302–519 is the Histidine kinase domain; the sequence is DVSHELRTPL…CFRLTLPLVR (218 aa). Positions 526–562 are disordered; the sequence is SPLPMKPILQPSPQASTAGQQHGTQRQRLREHAERSR. Polar residues predominate over residues 536–551; it reads PSPQASTAGQQHGTQR. Positions 553 to 562 are enriched in basic and acidic residues; the sequence is RLREHAERSR.

It is found in the cell membrane. The enzyme catalyses ATP + protein L-histidine = ADP + protein N-phospho-L-histidine.. Functionally, member of the two-component regulatory system MtrA/MtrB. Seems to function as a membrane-associated protein kinase that phosphorylates MtrA in response to environmental signals. The protein is Sensor histidine kinase MtrB (mtrB) of Mycobacterium leprae (strain TN).